The sequence spans 763 residues: Endoplasmic reticulum membrane sensor NFE2L1 (763 aa).

The chain crosses the membrane as a helical; Signal-anchor for type II membrane protein span at residues 7-24 (YLTEGLLQFTILLSLIGV). The tract at residues 108-150 (DPEGSVSGSQPSSGLALESSSGLQDVTGPDNGVRESETEQGFS) is disordered. The span at 116-131 (SQPSSGLALESSSGLQ) shows a compositional bias: low complexity. The interval 180–188 (IFDYSHRQK) is cholesterol recognition/amino acid consensus (CRAC) region. Asn338 and Asn350 each carry an N-linked (GlcNAc...) asparagine glycan. Positions 369 to 373 (SPEVE) are CPD. Asn413 carries an N-linked (GlcNAc...) asparagine glycan. 2 disordered regions span residues 460 to 523 (EEEF…DSET) and 585 to 604 (TLKK…QMSR). A Destruction motif motif is present at residues 466–470 (DSGLS). Residues 466 to 514 (DSGLSLDSSHSPSSLSSSEGSSSSSSSSSSSSSSSASSSASSSFSEEGA) are compositionally biased toward low complexity. Ser519 carries the post-translational modification Phosphoserine; by CK2. Residues 589-604 (GSKEKQADFLDKQMSR) show a composition bias toward basic and acidic residues. A Phosphoserine; by PKA modification is found at Ser590. The bZIP domain maps to 645–708 (LIRDIRRRGK…RQMKQKVQSL (64 aa)). The segment at 647–666 (RDIRRRGKNKMAAQNCRKRK) is basic motif. The tract at residues 673 to 687 (LERDVEDLQRDKARL) is leucine-zipper. Residues 752–759 (RRQERKPK) carry the Nuclear localization signal motif.

This sequence belongs to the bZIP family. CNC subfamily. Interacts with KEAP1. As to quaternary structure, interacts (via CPD region) with FBXW7; leading to its ubiquitination and degradation. Interacts with SYVN1/HRD1; leading to its ubiquitination and degradation. Interacts (when ubiquitinated) with DDI2; leading to its cleavage. In terms of assembly, interacts (via the bZIP domain) with small MAF protein (MAFF, MAFG or MAFK); required for binding to antioxidant response elements (AREs) on DNA. Interacts (via Destruction motif) with BTRC; leading to its ubiquitination and degradation. Interacts with CEBPB; the heterodimer represses expression of DSPP during odontoblast differentiation. Interacts with MOTS-c, a peptide produced by the mitochondrially encoded 12S rRNA MT-RNR1. Cleaved at Leu-104 by the aspartyl protease DDI2 following retrotranslocation, releasing the protein from the endoplasmic reticulum membrane and forming the transcription factor NRF1 that translocates into the nucleus. Ubiquitination is prerequisite for cleavage by aspartyl protease DDI2. Post-translationally, N-glycosylated in normal conditions, when it has a single-pass type II membrane protein topology, with the DNA-binding domain facing the endoplasmic reticulum lumen. Deglycosylated during retrotranslocation to the cytosolic side of the membrane, to have a single-pass type III membrane protein topology with the major part of the protein facing the cytosol. In terms of processing, ubiquitinated by the SCF(FBXW7) complex and SYVN1/HRD1, leading to its degradation by the proteasome. Ubiquitinated during retrotranslocation to the cytosolic side of the membrane: ubiquitination does not lead to degradation and is required for processing by the aspartyl protease DDI2 and subsequent release from the endoplasmic reticulum membrane. Phosphorylation by CK2 at Ser-519 inhibits transcription factor activity, possibly by affecting DNA-binding activity. Phosphorylation at Ser-590 is required for interaction with CEBPB. Post-translationally, ubiquitinated by the SCF(BTRC) complex in the nucleus, leading to its degradation by the proteasome.

The protein localises to the endoplasmic reticulum membrane. It is found in the nucleus. Endoplasmic reticulum membrane sensor that translocates into the nucleus in response to various stresses to act as a transcription factor. Constitutes a precursor of the transcription factor NRF1. Able to detect various cellular stresses, such as cholesterol excess, oxidative stress or proteasome inhibition. In response to stress, it is released from the endoplasmic reticulum membrane following cleavage by the protease DDI2 and translocates into the nucleus to form the transcription factor NRF1. Acts as a key sensor of cholesterol excess: in excess cholesterol conditions, the endoplasmic reticulum membrane form of the protein directly binds cholesterol via its CRAC motif, preventing cleavage and release of the transcription factor NRF1, thereby allowing expression of genes promoting cholesterol removal, such as CD36. Involved in proteasome homeostasis: in response to proteasome inhibition, it is released from the endoplasmic reticulum membrane, translocates to the nucleus and activates expression of genes encoding proteasome subunits. In terms of biological role, CNC-type bZIP family transcription factor that translocates to the nucleus and regulates expression of target genes in response to various stresses. Heterodimerizes with small-Maf proteins (MAFF, MAFG or MAFK) and binds DNA motifs including the antioxidant response elements (AREs), which regulate expression of genes involved in oxidative stress response. Activates or represses expression of target genes, depending on the context. Plays a key role in cholesterol homeostasis by acting as a sensor of cholesterol excess: in low cholesterol conditions, translocates into the nucleus and represses expression of genes involved in defense against cholesterol excess, such as CD36. In excess cholesterol conditions, the endoplasmic reticulum membrane form of the protein directly binds cholesterol via its CRAC motif, preventing cleavage and release of the transcription factor NRF1, thereby allowing expression of genes promoting cholesterol removal. Critical for redox balance in response to oxidative stress: acts by binding the AREs motifs on promoters and mediating activation of oxidative stress response genes, such as GCLC, GCLM, GSS, MT1 and MT2. Plays an essential role during fetal liver hematopoiesis: probably has a protective function against oxidative stress and is involved in lipid homeostasis in the liver. Involved in proteasome homeostasis: in response to proteasome inhibition, mediates the 'bounce-back' of proteasome subunits by translocating into the nucleus and activating expression of genes encoding proteasome subunits. Also involved in regulating glucose flux. Together with CEBPB; represses expression of DSPP during odontoblast differentiation. In response to ascorbic acid induction, activates expression of SP7/Osterix in osteoblasts. This chain is Endoplasmic reticulum membrane sensor NFE2L1, found in Bos taurus (Bovine).